The following is a 190-amino-acid chain: UPF0340 protein BC_5317 (190 aa).

The protein belongs to the UPF0340 family.

This Bacillus cereus (strain ATCC 14579 / DSM 31 / CCUG 7414 / JCM 2152 / NBRC 15305 / NCIMB 9373 / NCTC 2599 / NRRL B-3711) protein is UPF0340 protein BC_5317.